The following is a 320-amino-acid chain: MIPRFDFPWPSACHPHARQAEQGALAFAERHGLVPTAAYRSRLERTRYGWLAARCYPDADDVLLQLCADYFIWFFIVDDLFVDRVDTLSERTIPNLTAMIDVLDHHRPGAEPVFGEHAWLDVCTRLRAYLSDEHFQRFAHGMRMWAATAGLQIANHLGADTVDVAPYETIRRHTSGTNPCLALADAAKHGPVTPAEYHSPPVQRLVLHANNVVCWSNDVQSLKMELNQPGQYWNMAAIYAHRGLSLQQAVDLVALRVRGEIASFQSLALTLEPHASRPLRGFVDGLRHWMRGYQDWVENDTLRYADAFIAEDADDTAVRT.

Positions 78 and 83 each coordinate Mg(2+). Positions 78–83 match the DDXXXD motif motif; the sequence is DDLFVD. Arginine 171 is a substrate binding site. Residues asparagine 217, serine 221, and glutamate 225 each contribute to the Mg(2+) site.

Belongs to the terpene synthase family. Mg(2+) serves as cofactor.

It catalyses the reaction (2E,6E)-farnesyl diphosphate + H2O = (+)-corvol ether B + diphosphate. It carries out the reaction (2E,6E)-farnesyl diphosphate + H2O = (+)-corvol ether A + diphosphate. The protein operates within secondary metabolite biosynthesis; terpenoid biosynthesis. In terms of biological role, catalyzes the conversion of (2E,6E)-farnesyl diphosphate (FPP) into (+)-corvol ether A and (+)-corvol ether B via a 1,10-cyclization, which requires isomerization of FPP to nerolidyl diphosphate (NPP) and then abstraction of the pyrophosphate from intermediate NPP leading to a (E,Z)-germacradienyl (helminthogermacradienyl) cation. The preferred substrate is (2E,6E)-farnesyl diphosphate (FPP), however geranyl diphosphate (GPP) is also able to produce small amounts of several acyclic and cyclic monoterpenes, with linalool as the main product. This chain is (+)-corvol ether B synthase/(+)-corvol ether A synthase ((2E,6E)-farnesyl diphosphate cyclizing), found in Kitasatospora setae (strain ATCC 33774 / DSM 43861 / JCM 3304 / KCC A-0304 / NBRC 14216 / KM-6054) (Streptomyces setae).